The primary structure comprises 456 residues: Bifunctional protein GlmU (456 aa).

Residues 1 to 229 (MLNNAMSVVI…LSEVEGVNNR (229 aa)) are pyrophosphorylase. Residues 11–14 (LAAG), K25, Q76, 81–82 (GT), 103–105 (YGD), G140, E154, N169, and N227 each bind UDP-N-acetyl-alpha-D-glucosamine. Residue D105 participates in Mg(2+) binding. N227 is a binding site for Mg(2+). The interval 230 to 250 (LQLSRLERVYQSEQAEKLLLA) is linker. The tract at residues 251-456 (GVMLRDPARF…EGWRRPVKKK (206 aa)) is N-acetyltransferase. UDP-N-acetyl-alpha-D-glucosamine-binding residues include R333 and K351. The active-site Proton acceptor is the H363. UDP-N-acetyl-alpha-D-glucosamine-binding residues include Y366 and N377. Acetyl-CoA-binding positions include A380, 386 to 387 (NY), S405, A423, and R440.

In the N-terminal section; belongs to the N-acetylglucosamine-1-phosphate uridyltransferase family. The protein in the C-terminal section; belongs to the transferase hexapeptide repeat family. As to quaternary structure, homotrimer. The cofactor is Mg(2+).

The protein localises to the cytoplasm. It carries out the reaction alpha-D-glucosamine 1-phosphate + acetyl-CoA = N-acetyl-alpha-D-glucosamine 1-phosphate + CoA + H(+). It catalyses the reaction N-acetyl-alpha-D-glucosamine 1-phosphate + UTP + H(+) = UDP-N-acetyl-alpha-D-glucosamine + diphosphate. It functions in the pathway nucleotide-sugar biosynthesis; UDP-N-acetyl-alpha-D-glucosamine biosynthesis; N-acetyl-alpha-D-glucosamine 1-phosphate from alpha-D-glucosamine 6-phosphate (route II): step 2/2. It participates in nucleotide-sugar biosynthesis; UDP-N-acetyl-alpha-D-glucosamine biosynthesis; UDP-N-acetyl-alpha-D-glucosamine from N-acetyl-alpha-D-glucosamine 1-phosphate: step 1/1. The protein operates within bacterial outer membrane biogenesis; LPS lipid A biosynthesis. Its function is as follows. Catalyzes the last two sequential reactions in the de novo biosynthetic pathway for UDP-N-acetylglucosamine (UDP-GlcNAc). The C-terminal domain catalyzes the transfer of acetyl group from acetyl coenzyme A to glucosamine-1-phosphate (GlcN-1-P) to produce N-acetylglucosamine-1-phosphate (GlcNAc-1-P), which is converted into UDP-GlcNAc by the transfer of uridine 5-monophosphate (from uridine 5-triphosphate), a reaction catalyzed by the N-terminal domain. This chain is Bifunctional protein GlmU, found in Escherichia coli O157:H7 (strain EC4115 / EHEC).